The sequence spans 385 residues: Proliferation-associated protein A (385 aa).

It belongs to the peptidase M24 family.

The protein is Proliferation-associated protein A (prlA) of Dictyostelium discoideum (Social amoeba).